We begin with the raw amino-acid sequence, 77 residues long: Translation initiation factor IF-1, chloroplastic (77 aa).

The S1-like domain occupies 1-71; it reads MKEQKLIHEG…TRGRIIYRLR (71 aa).

Belongs to the IF-1 family. Component of the 30S ribosomal translation pre-initiation complex which assembles on the 30S ribosome in the order IF-2 and IF-3, IF-1 and N-formylmethionyl-tRNA(fMet); mRNA recruitment can occur at any time during PIC assembly.

Its subcellular location is the plastid. It is found in the chloroplast. In terms of biological role, one of the essential components for the initiation of protein synthesis. Stabilizes the binding of IF-2 and IF-3 on the 30S subunit to which N-formylmethionyl-tRNA(fMet) subsequently binds. Helps modulate mRNA selection, yielding the 30S pre-initiation complex (PIC). Upon addition of the 50S ribosomal subunit IF-1, IF-2 and IF-3 are released leaving the mature 70S translation initiation complex. The sequence is that of Translation initiation factor IF-1, chloroplastic from Asarum canadense (Wild ginger).